The sequence spans 364 residues: Mannose-1-phosphate guanyltransferase (364 aa).

The protein belongs to the transferase hexapeptide repeat family.

The protein resides in the cytoplasm. The enzyme catalyses alpha-D-mannose 1-phosphate + GTP + H(+) = GDP-alpha-D-mannose + diphosphate. It functions in the pathway nucleotide-sugar biosynthesis; GDP-alpha-D-mannose biosynthesis; GDP-alpha-D-mannose from alpha-D-mannose 1-phosphate (GTP route): step 1/1. Its function is as follows. Involved in cell wall synthesis where it is required for glycosylation. Involved in cell cycle progression through cell-size checkpoint. This Gibberella zeae (strain ATCC MYA-4620 / CBS 123657 / FGSC 9075 / NRRL 31084 / PH-1) (Wheat head blight fungus) protein is Mannose-1-phosphate guanyltransferase (MPG1).